Here is a 274-residue protein sequence, read N- to C-terminus: Protein RecA (274 aa).

Position 43–50 (43–50 (GPESSGKT)) interacts with ATP.

This sequence belongs to the RecA family.

The protein localises to the cytoplasm. Its function is as follows. Can catalyze the hydrolysis of ATP in the presence of single-stranded DNA, the ATP-dependent uptake of single-stranded DNA by duplex DNA, and the ATP-dependent hybridization of homologous single-stranded DNAs. It interacts with LexA causing its activation and leading to its autocatalytic cleavage. The protein is Protein RecA of Neisseria flavescens.